Here is a 599-residue protein sequence, read N- to C-terminus: Zinc metalloproteinase dpy-31 (599 aa).

Residues 1 to 22 form the signal peptide; it reads MALLKPFLSRTFSSFFATITGG. Positions 23 to 211 are excised as a propeptide; sequence RNLIDSIEEL…IQHGRRTKRK (189 aa). A Peptidase M12A domain is found at 211 to 410; it reads KFIRSELRRW…IRLMNVIYCS (200 aa). An N-linked (GlcNAc...) asparagine glycan is attached at N251. Disulfide bonds link C254–C409, C277–C298, C413–C433, C435–C444, and C455–C483. H306 is a Zn(2+) binding site. The active site involves E307. Zn(2+) contacts are provided by H310 and H316. Residues 405 to 445 form the EGF-like domain; it reads NVIYCSDSCAQKLPCQRGGYTDPRRCGRCRCPDGFTGKLCE. The 117-residue stretch at 455–571 folds into the CUB domain; it reads CGGRIELTSS…KGFQAQVRAL (117 aa). An N-linked (GlcNAc...) asparagine glycan is attached at N522.

Requires Zn(2+) as cofactor.

It is found in the secreted. Its activity is regulated as follows. Inhibited by marimastat and tripeptide hydroxamic acids. In terms of biological role, metalloprotease which cleaves the carboxyl terminus of procollagens to mature collagens. Probably involved in cuticular collagen maturation. This Brugia malayi (Filarial nematode worm) protein is Zinc metalloproteinase dpy-31.